Consider the following 332-residue polypeptide: 2,3-diketo-L-gulonate reductase (332 aa).

The Proton donor role is filled by His-44. Residues Ile-168–Ser-174, Trp-224–Lys-225, and Gly-304–Glu-306 each bind NAD(+).

It belongs to the LDH2/MDH2 oxidoreductase family. DlgD subfamily. As to quaternary structure, homodimer.

The protein resides in the cytoplasm. The enzyme catalyses 3-dehydro-L-gulonate + NAD(+) = 2,3-dioxo-L-gulonate + NADH + H(+). It carries out the reaction 3-dehydro-L-gulonate + NADP(+) = 2,3-dioxo-L-gulonate + NADPH + H(+). Catalyzes the reduction of 2,3-diketo-L-gulonate in the presence of NADH, to form 3-keto-L-gulonate. This chain is 2,3-diketo-L-gulonate reductase, found in Salmonella paratyphi C (strain RKS4594).